We begin with the raw amino-acid sequence, 239 residues long: Ribonuclease PH (239 aa).

Residues R86 and 124 to 126 (GTR) contribute to the phosphate site.

Belongs to the RNase PH family. As to quaternary structure, homohexameric ring arranged as a trimer of dimers.

The enzyme catalyses tRNA(n+1) + phosphate = tRNA(n) + a ribonucleoside 5'-diphosphate. Its function is as follows. Phosphorolytic 3'-5' exoribonuclease that plays an important role in tRNA 3'-end maturation. Removes nucleotide residues following the 3'-CCA terminus of tRNAs; can also add nucleotides to the ends of RNA molecules by using nucleoside diphosphates as substrates, but this may not be physiologically important. Probably plays a role in initiation of 16S rRNA degradation (leading to ribosome degradation) during starvation. This chain is Ribonuclease PH, found in Rhizobium johnstonii (strain DSM 114642 / LMG 32736 / 3841) (Rhizobium leguminosarum bv. viciae).